The following is a 588-amino-acid chain: UDP-N-acetylmuramate--L-alanine ligase (588 aa).

119–125 provides a ligand contact to ATP; sequence GSHGKST. Over residues 344 to 371 the composition is skewed to low complexity; it reads VPAAAGAAAAPPVRRDPATAAAAATTAP. The interval 344 to 411 is disordered; it reads VPAAAGAAAA…APAAGPDHAA (68 aa). Residues 372–381 show a composition bias toward pro residues; it reads IGPPDSPPPT. Positions 382–411 are enriched in low complexity; it reads GIALPRAAPPAVDAPVAATPAPAAGPDHAA.

The protein belongs to the MurCDEF family.

It is found in the cytoplasm. It carries out the reaction UDP-N-acetyl-alpha-D-muramate + L-alanine + ATP = UDP-N-acetyl-alpha-D-muramoyl-L-alanine + ADP + phosphate + H(+). The protein operates within cell wall biogenesis; peptidoglycan biosynthesis. In terms of biological role, cell wall formation. In Frankia alni (strain DSM 45986 / CECT 9034 / ACN14a), this protein is UDP-N-acetylmuramate--L-alanine ligase.